Consider the following 219-residue polypeptide: MALLTPLPGSVRHGLARISGSLFIQNKTRDCGEQHAYQSGHDLLSSLPLQMMLYFNAFFFPFWIISEIITMELKFGRLSGYYQILLTTSLVILTLVESLRLYIGYVGNLHEKVPELAGFLILTLLIQLPLLLFLLTDNRNLLLPLDLAVHMIYLMFINAEIVISFLVLKTMTRQFALEYYLQQSEILVSKHVPVNRTLLRFQNTTTSIAEQYGSDALMY.

N-linked (GlcNAc...) asparagine glycosylation occurs at N26. 4 helical membrane passes run 51–71 (MMLY…IITM), 84–104 (ILLT…LYIG), 116–136 (LAGF…FLLT), and 147–167 (LAVH…SFLV). Residues N195 and N203 are each glycosylated (N-linked (GlcNAc...) asparagine).

The protein belongs to the TMEM17 family. As to quaternary structure, part of the tectonic-like complex (also named B9 complex).

The protein resides in the cell projection. Its subcellular location is the cilium membrane. Functionally, transmembrane component of the tectonic-like complex, a complex localized at the transition zone of primary cilia and acting as a barrier that prevents diffusion of transmembrane proteins between the cilia and plasma membranes. Required for ciliogenesis and sonic hedgehog/SHH signaling. The protein is Transmembrane protein 17B (Tmem17-b) of Xenopus tropicalis (Western clawed frog).